We begin with the raw amino-acid sequence, 343 residues long: Uroporphyrinogen decarboxylase (343 aa).

Residues 23–27, Asp73, Tyr150, Ser205, and His322 contribute to the substrate site; that span reads RQAGR.

Belongs to the uroporphyrinogen decarboxylase family. In terms of assembly, homodimer.

The protein localises to the cytoplasm. The enzyme catalyses uroporphyrinogen III + 4 H(+) = coproporphyrinogen III + 4 CO2. Its pathway is porphyrin-containing compound metabolism; protoporphyrin-IX biosynthesis; coproporphyrinogen-III from 5-aminolevulinate: step 4/4. In terms of biological role, catalyzes the decarboxylation of four acetate groups of uroporphyrinogen-III to yield coproporphyrinogen-III. This is Uroporphyrinogen decarboxylase from Cereibacter sphaeroides (strain ATCC 17025 / ATH 2.4.3) (Rhodobacter sphaeroides).